We begin with the raw amino-acid sequence, 256 residues long: Thiazole synthase (256 aa).

The Schiff-base intermediate with DXP role is filled by K95. Residues G156, 182 to 183 (AG), and 204 to 205 (NT) contribute to the 1-deoxy-D-xylulose 5-phosphate site.

It belongs to the ThiG family. As to quaternary structure, homotetramer. Forms heterodimers with either ThiH or ThiS.

Its subcellular location is the cytoplasm. The enzyme catalyses [ThiS sulfur-carrier protein]-C-terminal-Gly-aminoethanethioate + 2-iminoacetate + 1-deoxy-D-xylulose 5-phosphate = [ThiS sulfur-carrier protein]-C-terminal Gly-Gly + 2-[(2R,5Z)-2-carboxy-4-methylthiazol-5(2H)-ylidene]ethyl phosphate + 2 H2O + H(+). It participates in cofactor biosynthesis; thiamine diphosphate biosynthesis. Its function is as follows. Catalyzes the rearrangement of 1-deoxy-D-xylulose 5-phosphate (DXP) to produce the thiazole phosphate moiety of thiamine. Sulfur is provided by the thiocarboxylate moiety of the carrier protein ThiS. In vitro, sulfur can be provided by H(2)S. The chain is Thiazole synthase from Salmonella arizonae (strain ATCC BAA-731 / CDC346-86 / RSK2980).